The following is a 101-amino-acid chain: Small ribosomal subunit protein uS14 (101 aa).

This sequence belongs to the universal ribosomal protein uS14 family. Part of the 30S ribosomal subunit. Contacts proteins S3 and S10.

Functionally, binds 16S rRNA, required for the assembly of 30S particles and may also be responsible for determining the conformation of the 16S rRNA at the A site. The sequence is that of Small ribosomal subunit protein uS14 from Burkholderia mallei (strain NCTC 10247).